The following is a 315-amino-acid chain: Mitochondrial outer membrane import complex protein METAXIN (315 aa).

Methionine 1 is subject to N-acetylmethionine. The stretch at 157 to 181 (ENAEQREKQIYKRASEAYEALSTRL) forms a coiled coil. Residues 195–215 (LDAFLLSHILFIIQALPVTSV) form a helical membrane-spanning segment. Residues 240-277 (ASSSSPSPPLHSFPSSFPRKSSKPKSKPKVEKTEEEKK) are disordered. The segment covering 267–277 (PKVEKTEEEKK) has biased composition (basic and acidic residues). Residues 284–304 (FFLAAQFLAVVIYVSVMGGGS) traverse the membrane as a helical segment.

Belongs to the metaxin family. In terms of assembly, part of a high molecular weight complex that is distinct from the TOM complex. Interacts with a variety of mitochondrial precursor proteins. In terms of tissue distribution, expressed in roots, young cotyledons, flowers and leaves.

It localises to the mitochondrion inner membrane. The protein resides in the mitochondrion outer membrane. In terms of biological role, involved in transport of proteins into the mitochondrion. The sequence is that of Mitochondrial outer membrane import complex protein METAXIN (MTX1) from Arabidopsis thaliana (Mouse-ear cress).